Consider the following 304-residue polypeptide: GTPase Era (304 aa).

The Era-type G domain maps to 9-176; sequence KSGFVSIIGR…LLEITKHLSE (168 aa). A G1 region spans residues 17–24; sequence GRPNVGKS. 17–24 provides a ligand contact to GTP; that stretch reads GRPNVGKS. Positions 43-47 are G2; sequence QTTRN. A G3 region spans residues 64 to 67; it reads DTPG. GTP-binding positions include 64-68 and 126-129; these read DTPGI and NKID. The tract at residues 126-129 is G4; sequence NKID. Residues 155-157 are G5; that stretch reads VSA. The KH type-2 domain occupies 199 to 285; that stretch reads IREKVLHLTR…FLELWVKVQK (87 aa).

Belongs to the TRAFAC class TrmE-Era-EngA-EngB-Septin-like GTPase superfamily. Era GTPase family. In terms of assembly, monomer.

The protein resides in the cytoplasm. Its subcellular location is the cell membrane. An essential GTPase that binds both GDP and GTP, with rapid nucleotide exchange. Plays a role in 16S rRNA processing and 30S ribosomal subunit biogenesis and possibly also in cell cycle regulation and energy metabolism. The protein is GTPase Era of Halalkalibacterium halodurans (strain ATCC BAA-125 / DSM 18197 / FERM 7344 / JCM 9153 / C-125) (Bacillus halodurans).